We begin with the raw amino-acid sequence, 325 residues long: Small ribosomal subunit biogenesis GTPase RsgA (325 aa).

Positions 80–241 constitute a CP-type G domain; it reads LSKQIHIIAS…IIDTPGIKGF (162 aa). GTP contacts are provided by residues 129–132 and 183–191; these read NKID and GHSGVGKST. Cysteine 265, cysteine 270, histidine 272, and cysteine 278 together coordinate Zn(2+).

This sequence belongs to the TRAFAC class YlqF/YawG GTPase family. RsgA subfamily. In terms of assembly, monomer. Associates with 30S ribosomal subunit, binds 16S rRNA. The cofactor is Zn(2+).

It is found in the cytoplasm. One of several proteins that assist in the late maturation steps of the functional core of the 30S ribosomal subunit. Helps release RbfA from mature subunits. May play a role in the assembly of ribosomal proteins into the subunit. Circularly permuted GTPase that catalyzes slow GTP hydrolysis, GTPase activity is stimulated by the 30S ribosomal subunit. This is Small ribosomal subunit biogenesis GTPase RsgA from Flavobacterium johnsoniae (strain ATCC 17061 / DSM 2064 / JCM 8514 / BCRC 14874 / CCUG 350202 / NBRC 14942 / NCIMB 11054 / UW101) (Cytophaga johnsonae).